A 475-amino-acid chain; its full sequence is Bifunctional protein HldE (475 aa).

The ribokinase stretch occupies residues 1–318 (MKITLPEFGK…ANALYTEQET (318 aa)). 195–198 (NMSE) provides a ligand contact to ATP. Residue Asp-264 is part of the active site. Positions 344 to 475 (MTNGCFDILH…DIIKTIRERG (132 aa)) are cytidylyltransferase.

The protein in the N-terminal section; belongs to the carbohydrate kinase PfkB family. In the C-terminal section; belongs to the cytidylyltransferase family. In terms of assembly, homodimer.

The catalysed reaction is D-glycero-beta-D-manno-heptose 7-phosphate + ATP = D-glycero-beta-D-manno-heptose 1,7-bisphosphate + ADP + H(+). It carries out the reaction D-glycero-beta-D-manno-heptose 1-phosphate + ATP + H(+) = ADP-D-glycero-beta-D-manno-heptose + diphosphate. It participates in nucleotide-sugar biosynthesis; ADP-L-glycero-beta-D-manno-heptose biosynthesis; ADP-L-glycero-beta-D-manno-heptose from D-glycero-beta-D-manno-heptose 7-phosphate: step 1/4. The protein operates within nucleotide-sugar biosynthesis; ADP-L-glycero-beta-D-manno-heptose biosynthesis; ADP-L-glycero-beta-D-manno-heptose from D-glycero-beta-D-manno-heptose 7-phosphate: step 3/4. Its function is as follows. Catalyzes the phosphorylation of D-glycero-D-manno-heptose 7-phosphate at the C-1 position to selectively form D-glycero-beta-D-manno-heptose-1,7-bisphosphate. Catalyzes the ADP transfer from ATP to D-glycero-beta-D-manno-heptose 1-phosphate, yielding ADP-D-glycero-beta-D-manno-heptose. This is Bifunctional protein HldE from Aeromonas salmonicida (strain A449).